Consider the following 496-residue polypeptide: Angiopoietin-2 (496 aa).

The signal sequence occupies residues 1–18 (MWQLVFFALSCDLVLAAA). N-linked (GlcNAc...) asparagine glycans are attached at residues N89, N119, N133, N151, N240, and N304. Residues 130-255 (NLLNQTAEQT…KQQHDLMETV (126 aa)) adopt a coiled-coil conformation. Residues 275-495 (KEEQIIFRDC…ATTMMIRPAD (221 aa)) enclose the Fibrinogen C-terminal domain. C284 and C313 are joined by a disulfide. Ca(2+) contacts are provided by D429, D431, C433, and C435. Intrachain disulfides connect C433-C435 and C437-C450.

As to quaternary structure, interacts with TEK/TIE2, competing for the same binding site as ANGPT1. Interacts with ITGA5. Interacts with SVEP1/polydom. Interacts with THBD; this interaction significantly inhibits the generation of activated PC and TAFIa/CPB2 by the thrombin/thrombomodulin complex.

Its subcellular location is the secreted. Binds to TEK/TIE2, competing for the ANGPT1 binding site, and modulating ANGPT1 signaling. Can induce tyrosine phosphorylation of TEK/TIE2 in the absence of ANGPT1. In the absence of angiogenic inducers, such as VEGF, ANGPT2-mediated loosening of cell-matrix contacts may induce endothelial cell apoptosis with consequent vascular regression. In concert with VEGF, it may facilitate endothelial cell migration and proliferation, thus serving as a permissive angiogenic signal. Involved in the regulation of lymphangiogenesis. The polypeptide is Angiopoietin-2 (ANGPT2) (Sus scrofa (Pig)).